A 189-amino-acid chain; its full sequence is dCTP deaminase, dUMP-forming (189 aa).

Residues 101–106 (KSSLGR), D119, 127–129 (TLE), Q148, Y162, and Q174 each bind dCTP. The active-site Proton donor/acceptor is the E129.

The protein belongs to the dCTP deaminase family. Homotrimer.

It catalyses the reaction dCTP + 2 H2O = dUMP + NH4(+) + diphosphate. It functions in the pathway pyrimidine metabolism; dUMP biosynthesis; dUMP from dCTP: step 1/1. In terms of biological role, bifunctional enzyme that catalyzes both the deamination of dCTP to dUTP and the hydrolysis of dUTP to dUMP without releasing the toxic dUTP intermediate. This Rhodococcus jostii (strain RHA1) protein is dCTP deaminase, dUMP-forming.